The chain runs to 455 residues: MNLIRFLLVFQGKIQMNESRKKLNCQSRQFNVDKISDLPEDLLVHILSLLPTTNDIVATSGVSKRWESLWTKVHKLRFNDRIYDGKRYDSFLHFVEKSLILHKAPTLVSLRLSVGPKCTADDIGLWIKLALDRNICELIIKHYPDHGHIRLSRRLCDSKTLVSLKLKNAILGAIWLPTCFISLKTLHLRYVKYSGDESVRTLISSCPSLRNLVVKRHNEDNVKRFAIIVRYLQSLTVYLSPLHGVADSDAYVINTPNLKYLNIKDHYTDLCSFEDMPYLDEANLDVAFTHTENFFESLTSVKKLSLCLKKSNAQYPEGIIFSQLDHLELCTCDDSKWLNILAMLLPDSPKLRVLKLNDKNHDFVDKYCSCTWNQQPSYVPECLTKSLEIFEWRNYKATFRERDVAVYILKNSTCLKKTVISPKLKISGEICDHHIIREDLASLFMGSSSCELKFD.

The F-box domain occupies 32 to 81 (VDKISDLPEDLLVHILSLLPTTNDIVATSGVSKRWESLWTKVHKLRFNDR). The region spanning 372 to 421 (WNQQPSYVPECLTKSLEIFEWRNYKATFRERDVAVYILKNSTCLKKTVIS) is the FBD domain.

The protein is Putative FBD-associated F-box protein At5g56400 of Arabidopsis thaliana (Mouse-ear cress).